Here is a 1350-residue protein sequence, read N- to C-terminus: Zinc finger protein Xfin (1350 aa).

One can recognise a KRAB domain in the interval 1 to 58 (MEEPKCLQREMYKSVMTENYQCVLSLGYPIRKPEIVSMMEVGEELWSKNDSARPGQKE). The interval 47–68 (SKNDSARPGQKEVEGETPKESD) is disordered. 37 consecutive C2H2-type zinc fingers follow at residues 108–130 (HICS…QRMH), 136–158 (HHCP…QRTH), 164–186 (YQCV…QRTH), 192–214 (YTCL…RRTH), 220–242 (YRCS…LRTH), 248–270 (YECP…KRTH), 276–298 (FRCS…MRKH), 326–348 (YSCS…QQTH), 354–376 (YLCS…FRTH), 382–404 (YQCA…LRTH), 410–432 (FKCS…QRTH), 438–460 (YKCS…QRIH), 466–488 (YKCT…QKVH), 503–525 (HKCS…SKLH), 531–553 (FQCA…IRVH), 559–581 (FKCL…WRIH), 587–609 (FPCY…HRTH), 615–637 (HKCS…SRTH), 643–665 (YPCT…QRIH), 671–693 (YHCT…RRTH), 699–721 (YRCP…LVVH), 750–772 (YPCT…LRTH), 778–800 (YPCN…LRTH), 806–828 (YHCP…QRTH), 834–856 (YTCS…MRTH), 862–884 (YKCE…QRIH), 890–912 (YHCP…QRIH), 918–940 (YPCG…LKCH), 988–1010 (FKCN…VRIH), 1016–1038 (YKCS…YRTH), 1044–1066 (YKCG…QRVH), 1136–1158 (YSCS…WRMH), 1164–1186 (YTCK…VRIH), 1192–1214 (YPCS…QRIH), 1220–1242 (YTCT…SRTH), 1248–1270 (YKCN…MRTH), and 1276–1298 (YGCN…QRMC).

This sequence belongs to the krueppel C2H2-type zinc-finger protein family. In terms of processing, phosphorylated. Phosphorylation enhances RNA binding. In terms of tissue distribution, expressed in oocytes, and in specialized cell types such as neural retina cones in adults.

It is found in the cytoplasm. Functionally, binds to poly-G sequences in RNA. May function in post-translational regulation processes. The polypeptide is Zinc finger protein Xfin (Xenopus laevis (African clawed frog)).